The sequence spans 123 residues: UPF0102 protein CLM_2733 (123 aa).

It belongs to the UPF0102 family.

The sequence is that of UPF0102 protein CLM_2733 from Clostridium botulinum (strain Kyoto / Type A2).